The primary structure comprises 430 residues: Tektin-2 (430 aa).

Coiled-coil stretches lie at residues 75–162 (KEML…FQHL) and 226–380 (KNRA…IACK).

The protein belongs to the tektin family. In terms of assembly, microtubule inner protein component of sperm flagellar doublet microtubules. May interact with CCDC172. Post-translationally, tyrosine phosphorylated. Ubiquitinated, leading to its degradation. Deubiquitinated by USP16, promoting its stability.

The protein resides in the cytoplasm. It is found in the cytoskeleton. It localises to the cilium axoneme. The protein localises to the flagellum axoneme. Its subcellular location is the microtubule organizing center. In terms of biological role, microtubule inner protein (MIP) part of the dynein-decorated doublet microtubules (DMTs) in cilia and flagellar axoneme. Plays a key role in the assembly or attachment of the inner dynein arm to microtubules in sperm flagella and tracheal cilia. Forms filamentous polymers in the walls of ciliary and flagellar microtubules. The sequence is that of Tektin-2 (Tekt2) from Rattus norvegicus (Rat).